A 488-amino-acid chain; its full sequence is Multidrug resistance outer membrane protein MdtP (488 aa).

An N-terminal signal peptide occupies residues 1–23 (MINRQLSRLLLCSILGSTTLISG). C24 is lipidated: N-palmitoyl cysteine. Residue C24 is the site of S-diacylglycerol cysteine attachment.

Belongs to the outer membrane factor (OMF) (TC 1.B.17) family. As to quaternary structure, could be part of a tripartite efflux system composed of MdtN, MdtO and MdtP.

The protein localises to the cell outer membrane. In terms of biological role, could be involved in resistance to puromycin, acriflavine and tetraphenylarsonium chloride. The protein is Multidrug resistance outer membrane protein MdtP (mdtP) of Escherichia coli O157:H7.